The primary structure comprises 212 residues: Fe/S biogenesis protein NfuA (212 aa).

Residues Cys169 and Cys172 each coordinate [4Fe-4S] cluster.

Belongs to the NfuA family. Homodimer. Requires [4Fe-4S] cluster as cofactor.

Involved in iron-sulfur cluster biogenesis. Binds a 4Fe-4S cluster, can transfer this cluster to apoproteins, and thereby intervenes in the maturation of Fe/S proteins. Could also act as a scaffold/chaperone for damaged Fe/S proteins. The protein is Fe/S biogenesis protein NfuA of Acinetobacter baumannii (strain SDF).